Here is a 458-residue protein sequence, read N- to C-terminus: BUD13 homolog (458 aa).

3 disordered regions span residues 16 to 37 (SGDIEKKKKKKNKDKNKPSGLR), 81 to 328 (KQTF…TEEL), and 437 to 458 (AKTENTKTANQSEYYKSIAEYE). A compositionally biased stretch (basic and acidic residues) spans 138–148 (NRHDSDKDNSP). Composition is skewed to basic residues over residues 175 to 185 (RNRRSPPRTRR) and 208 to 218 (PRRRPSSPARR). Composition is skewed to basic and acidic residues over residues 219 to 243 (RKDDDLSPPRKSRKIEEPKKIKKEE), 266 to 284 (RDLKEESDKLRAKNSKMFE), and 314 to 328 (DQAKKERETKKTEEL). Residues 262 to 356 (LQSARDLKEE…AQLEEMARVA (95 aa)) are a coiled coil.

The protein belongs to the CWC26 family.

This is BUD13 homolog from Caenorhabditis elegans.